Consider the following 262-residue polypeptide: Transmembrane protein 81 (262 aa).

An N-terminal signal peptide occupies residues 1–30 (MKAVATVFICGSLVLITYLPLVVTSPQTLA). Over 31–225 (IPEKLRQAVG…HLPGWRKKVS (195 aa)) the chain is Extracellular. An N-linked (GlcNAc...) asparagine glycan is attached at N45. The 89-residue stretch at 83–171 (TNWICGMLHF…VQQLKNLKLV (89 aa)) folds into the Ig-like domain. A disulfide bridge links C104 with C160. N211 carries an N-linked (GlcNAc...) asparagine glycan. A helical membrane pass occupies residues 226 to 246 (LALGVGIAAGVVGGVLVNVAL). The Cytoplasmic portion of the chain corresponds to 247 to 262 (CRVLGGTGGNGNLSSL).

Forms a complex with IZUMO1 and SPACA6 on spermatocyte cell membrane required for fertilization.

The protein localises to the cell membrane. Essential fertilization factor required for male fertility. Part of a conserved trimeric sperm complex with the essential fertilization factors IZUMO1 and SPACA6 which bridges sperm and oocyte membranes during fertilization by binding to IZUMO1R/JUNO on the oocyte. This is Transmembrane protein 81 (Tmem81) from Rattus norvegicus (Rat).